The sequence spans 149 residues: Protein NrdI (149 aa).

This sequence belongs to the NrdI family.

In terms of biological role, probably involved in ribonucleotide reductase function. The polypeptide is Protein NrdI (Malacoplasma penetrans (strain HF-2) (Mycoplasma penetrans)).